We begin with the raw amino-acid sequence, 205 residues long: Peptidyl-tRNA hydrolase (205 aa).

TRNA is bound at residue tyrosine 14. The active-site Proton acceptor is histidine 19. Residues tyrosine 68, asparagine 70, and asparagine 116 each contribute to the tRNA site.

This sequence belongs to the PTH family. As to quaternary structure, monomer.

The protein resides in the cytoplasm. The enzyme catalyses an N-acyl-L-alpha-aminoacyl-tRNA + H2O = an N-acyl-L-amino acid + a tRNA + H(+). In terms of biological role, hydrolyzes ribosome-free peptidyl-tRNAs (with 1 or more amino acids incorporated), which drop off the ribosome during protein synthesis, or as a result of ribosome stalling. Catalyzes the release of premature peptidyl moieties from peptidyl-tRNA molecules trapped in stalled 50S ribosomal subunits, and thus maintains levels of free tRNAs and 50S ribosomes. This Caulobacter vibrioides (strain ATCC 19089 / CIP 103742 / CB 15) (Caulobacter crescentus) protein is Peptidyl-tRNA hydrolase.